Consider the following 177-residue polypeptide: CASP-like protein 5A2 (177 aa).

The Cytoplasmic portion of the chain corresponds to 1–36 (MNASHPAVHPVGVPPAVAGQLPPRMRMKEIQGMPGT). Residues 37 to 57 (IGGLLLRLGQFCFALVAFSIM) form a helical membrane-spanning segment. Residues 58-68 (VSIENFSTVTA) are Extracellular-facing. N62 is a glycosylation site (N-linked (GlcNAc...) asparagine). A helical transmembrane segment spans residues 69-89 (FCYLVAATVLQCLWSLALAII). Topologically, residues 90 to 103 (DGYALLVKRSLRNS) are cytoplasmic. The chain crosses the membrane as a helical span at residues 104–124 (LLVSLLVVGDGVTATLTFAAA). Residues 125–153 (CASAGITVLIGNDLRQCKENHCARYETAT) lie on the Extracellular side of the membrane. The helical transmembrane segment at 154-174 (ALAFLSWFMVSLSFILTFWLL) threads the bilayer. Topologically, residues 175 to 177 (ATR) are cytoplasmic.

This sequence belongs to the Casparian strip membrane proteins (CASP) family. In terms of assembly, homodimer and heterodimers.

It is found in the cell membrane. The sequence is that of CASP-like protein 5A2 from Ginkgo biloba (Ginkgo).